A 650-amino-acid chain; its full sequence is Acetyl-coenzyme A synthetase (650 aa).

Residues 191–194, T311, and N335 contribute to the CoA site; that span reads RGGR. ATP contacts are provided by residues 387–389, 411–416, D500, and R515; these read GEP and DTWWQT. S523 lines the CoA pocket. R526 contributes to the ATP binding site. The Mg(2+) site is built by V537, H539, and V542. Position 584 (R584) interacts with CoA. K609 bears the N6-acetyllysine mark.

It belongs to the ATP-dependent AMP-binding enzyme family. The cofactor is Mg(2+). Acetylated. Deacetylation by the SIR2-homolog deacetylase activates the enzyme.

The catalysed reaction is acetate + ATP + CoA = acetyl-CoA + AMP + diphosphate. In terms of biological role, catalyzes the conversion of acetate into acetyl-CoA (AcCoA), an essential intermediate at the junction of anabolic and catabolic pathways. AcsA undergoes a two-step reaction. In the first half reaction, AcsA combines acetate with ATP to form acetyl-adenylate (AcAMP) intermediate. In the second half reaction, it can then transfer the acetyl group from AcAMP to the sulfhydryl group of CoA, forming the product AcCoA. The protein is Acetyl-coenzyme A synthetase of Shewanella baltica (strain OS195).